The following is a 308-amino-acid chain: B- and T-lymphocyte attenuator (308 aa).

The signal sequence occupies residues 1 to 29 (MKTVPAMLVTPRSFREFFILLLGLWSILC). Topologically, residues 30 to 183 (KEPTKRIGEE…ERPGRTWLLY (154 aa)) are extracellular. Positions 32–134 (PTKRIGEECR…SANLNSEVIN (103 aa)) constitute an Ig-like V-type domain. 3 disulfide bridges follow: Cys-40/Cys-69, Cys-64/Cys-124, and Cys-78/Cys-85. Residues Asn-49, Asn-74, Asn-81, Asn-148, and Asn-165 are each glycosylated (N-linked (GlcNAc...) asparagine). Residues 184-204 (ALLPLGTSLLLLACVCLLCFL) traverse the membrane as a helical segment. Topologically, residues 205–308 (RRIQGKEKKP…TEYASICVRS (104 aa)) are cytoplasmic.

As to quaternary structure, interacts with tyrosine phosphatases PTPN6/SHP-1 and PTPN11/SHP-2. Interacts with TNFRSF14/HVEM (via cysteine-rich domain 1). In terms of processing, phosphorylated on Tyr residues by TNFRSF14 and by antigen receptors cross-linking, both inducing association with PTPN6 and PTPN11. Post-translationally, N-glycosylated.

Its subcellular location is the cell membrane. In terms of biological role, inhibitory receptor on lymphocytes that negatively regulates antigen receptor signaling via PTPN6/SHP-1 and PTPN11/SHP-2. May interact in cis (on the same cell) or in trans (on other cells) with TNFRSF14. In cis interactions, appears to play an immune regulatory role inhibiting in trans interactions in naive T cells to maintain a resting state. In trans interactions, can predominate during adaptive immune response to provide survival signals to effector T cells. The protein is B- and T-lymphocyte attenuator of Rattus norvegicus (Rat).